The sequence spans 295 residues: Ribosomal protein L11 methyltransferase (295 aa).

S-adenosyl-L-methionine contacts are provided by T138, G161, D183, and N230.

It belongs to the methyltransferase superfamily. PrmA family.

Its subcellular location is the cytoplasm. It carries out the reaction L-lysyl-[protein] + 3 S-adenosyl-L-methionine = N(6),N(6),N(6)-trimethyl-L-lysyl-[protein] + 3 S-adenosyl-L-homocysteine + 3 H(+). Functionally, methylates ribosomal protein L11. The protein is Ribosomal protein L11 methyltransferase of Rhodopseudomonas palustris (strain BisB5).